The following is a 334-amino-acid chain: Serine/Arginine-related protein 53 (334 aa).

Residues 1-13 are compositionally biased toward basic and acidic residues; it reads MGRRSSDTEEESR. 3 disordered regions span residues 1 to 179, 201 to 220, and 243 to 290; these read MGRR…HLPP, LKAK…EDQA, and QTFR…SIPT. 2 stretches are compositionally biased toward basic residues: residues 14–24 and 35–50; these read SKRKKKHRRRS and YSRK…KSRS. A compositionally biased stretch (basic and acidic residues) spans 51–62; sequence WSRDLQPRSHSY. The segment covering 78-118 has biased composition (basic residues); the sequence is SRRKRSRSRSRGRGKSYRVQRSRSKSRTRRSRSRPRLRSHS. 3 stretches are compositionally biased toward basic and acidic residues: residues 132 to 166, 201 to 218, and 247 to 259; these read RSRD…KRGE, LKAK…KEED, and SSKE…EPSE. Residues 180 to 236 adopt a coiled-coil conformation; sequence AEQAKARLQLVLEAAAKADEALKAKERNEEEAKRRKEEDQATLVEQVKRVKEIEAIE.

Interacts (via Arg/Ser-rich domain) with LUC7L3, RBM39 and RSF1. Post-translationally, phosphorylated. Widely expressed. Expressed in brain, spinal cord, cerebellum.

The protein resides in the nucleus. It is found in the nucleus speckle. Its subcellular location is the cytoplasm. In terms of biological role, has a role in alternative splicing and transcription regulation. Involved in both constitutive and alternative pre-mRNA splicing. May have a role in the recognition of the 3' splice site during the second step of splicing. The polypeptide is Serine/Arginine-related protein 53 (RSRC1) (Homo sapiens (Human)).